The following is an 83-amino-acid chain: Exodeoxyribonuclease 7 small subunit (83 aa).

The protein belongs to the XseB family. Heterooligomer composed of large and small subunits.

The protein localises to the cytoplasm. It carries out the reaction Exonucleolytic cleavage in either 5'- to 3'- or 3'- to 5'-direction to yield nucleoside 5'-phosphates.. In terms of biological role, bidirectionally degrades single-stranded DNA into large acid-insoluble oligonucleotides, which are then degraded further into small acid-soluble oligonucleotides. This chain is Exodeoxyribonuclease 7 small subunit, found in Bradyrhizobium sp. (strain ORS 278).